Consider the following 879-residue polypeptide: Leucine--tRNA ligase (879 aa).

A 'HIGH' region motif is present at residues 43–53 (PYPSGRIHMGH). A 'KMSKS' region motif is present at residues 636–640 (KMSKS). K639 contributes to the ATP binding site.

The protein belongs to the class-I aminoacyl-tRNA synthetase family.

The protein localises to the cytoplasm. The enzyme catalyses tRNA(Leu) + L-leucine + ATP = L-leucyl-tRNA(Leu) + AMP + diphosphate. This chain is Leucine--tRNA ligase, found in Afipia carboxidovorans (strain ATCC 49405 / DSM 1227 / KCTC 32145 / OM5) (Oligotropha carboxidovorans).